The primary structure comprises 523 residues: Na(+)/H(+) antiporter NhaB (523 aa).

Transmembrane regions (helical) follow at residues 28-48 (FLIINPFIVALNPFVAGWLLV), 51-71 (FIFTLSMALKCYPLLPGGLLA), 89-109 (LSANLEVLLLLMFMVAGIYFV), 137-157 (MAAFLSAFLDALTVVAVVISI), 237-257 (FFIRMSAVSIPVLICGLATCV), 302-322 (AIICVWLIVGLAFHLAAVGLI), 347-367 (TESLPFTALLSVFFVVVAVII), 390-410 (LFYIANGVLSMVSDNVFVGTV), 445-465 (VATPNGQAAFLFLLTSTLAPL), and 476-496 (MALPYTIVLAGVGLLSTMYLL).

It belongs to the NhaB Na(+)/H(+) (TC 2.A.34) antiporter family.

The protein localises to the cell inner membrane. The catalysed reaction is 2 Na(+)(in) + 3 H(+)(out) = 2 Na(+)(out) + 3 H(+)(in). Functionally, na(+)/H(+) antiporter that extrudes sodium in exchange for external protons. This chain is Na(+)/H(+) antiporter NhaB, found in Tolumonas auensis (strain DSM 9187 / NBRC 110442 / TA 4).